Consider the following 226-residue polypeptide: Large ribosomal subunit protein uL3 (226 aa).

The residue at position 160 (Gln160) is an N5-methylglutamine.

It belongs to the universal ribosomal protein uL3 family. In terms of assembly, part of the 50S ribosomal subunit. Forms a cluster with proteins L14 and L19. Post-translationally, methylated by PrmB.

One of the primary rRNA binding proteins, it binds directly near the 3'-end of the 23S rRNA, where it nucleates assembly of the 50S subunit. This is Large ribosomal subunit protein uL3 from Leptothrix cholodnii (strain ATCC 51168 / LMG 8142 / SP-6) (Leptothrix discophora (strain SP-6)).